We begin with the raw amino-acid sequence, 415 residues long: Exodeoxyribonuclease 7 large subunit (415 aa).

Belongs to the XseA family. Heterooligomer composed of large and small subunits.

Its subcellular location is the cytoplasm. The enzyme catalyses Exonucleolytic cleavage in either 5'- to 3'- or 3'- to 5'-direction to yield nucleoside 5'-phosphates.. In terms of biological role, bidirectionally degrades single-stranded DNA into large acid-insoluble oligonucleotides, which are then degraded further into small acid-soluble oligonucleotides. In Mycobacterium bovis (strain ATCC BAA-935 / AF2122/97), this protein is Exodeoxyribonuclease 7 large subunit.